A 1478-amino-acid chain; its full sequence is Zinc finger protein 518A (1478 aa).

4 C2H2-type zinc fingers span residues 152 to 174 (FPCE…RKTH), 209 to 231 (FQCE…IHRH), 236 to 258 (YKCG…LRVH), and 264 to 287 (FTCH…ITLH). The segment at 355–394 (TQTKSEDQSQEQLNEEKGGRQHCEDGDKPIESGSEKATVL) is disordered. Lysine 358 is covalently cross-linked (Glycyl lysine isopeptide (Lys-Gly) (interchain with G-Cter in SUMO2)). Residues 368–388 (NEEKGGRQHCEDGDKPIESGS) are compositionally biased toward basic and acidic residues. Glycyl lysine isopeptide (Lys-Gly) (interchain with G-Cter in SUMO2) cross-links involve residues lysine 390 and lysine 428. Residues 464–484 (PSPALQPNTEKESTANLPPQA) form a disordered region. A Glycyl lysine isopeptide (Lys-Gly) (interchain with G-Cter in SUMO2) cross-link involves residue lysine 518. A Phosphoserine modification is found at serine 652. A disordered region spans residues 656 to 694 (VCENLQRESSNKTVTQQSTSDSDTTSPLRKESSNSDSLL). A compositionally biased stretch (low complexity) spans 670-681 (TQQSTSDSDTTS). Residues lysine 707, lysine 792, lysine 882, lysine 895, lysine 987, lysine 1008, lysine 1041, lysine 1055, lysine 1078, lysine 1180, and lysine 1441 each participate in a glycyl lysine isopeptide (Lys-Gly) (interchain with G-Cter in SUMO2) cross-link. The C2H2-type 5 zinc finger occupies 1444–1466 (FNCWFCGRVFDNQDVWAGHGQRH).

This sequence belongs to the krueppel C2H2-type zinc-finger protein family.

Its subcellular location is the nucleus. Functionally, through its association with the EHMT1-EHMT2/G9A and PRC2/EED-EZH2 histone methyltransferase complexes may function in gene silencing, regulating repressive post-translational methylation of histone tails at promoters of target genes. This is Zinc finger protein 518A (Znf518a) from Rattus norvegicus (Rat).